Reading from the N-terminus, the 77-residue chain is MGSFSIWHWLIVLVIVMLVFGTKKLRNIGQDLGGAVKGFKDGMKEGNTDEPATPTPAKELRDSTTIDVEAKEKSRQQ.

The chain crosses the membrane as a helical span at residues 1 to 21 (MGSFSIWHWLIVLVIVMLVFG). The disordered stretch occupies residues 40–77 (KDGMKEGNTDEPATPTPAKELRDSTTIDVEAKEKSRQQ). Basic and acidic residues predominate over residues 58-77 (KELRDSTTIDVEAKEKSRQQ).

This sequence belongs to the TatA/E family. As to quaternary structure, the Tat system comprises two distinct complexes: a TatABC complex, containing multiple copies of TatA, TatB and TatC subunits, and a separate TatA complex, containing only TatA subunits. Substrates initially bind to the TatABC complex, which probably triggers association of the separate TatA complex to form the active translocon.

The protein resides in the cell inner membrane. In terms of biological role, part of the twin-arginine translocation (Tat) system that transports large folded proteins containing a characteristic twin-arginine motif in their signal peptide across membranes. TatA could form the protein-conducting channel of the Tat system. The chain is Sec-independent protein translocase protein TatA from Cupriavidus metallidurans (strain ATCC 43123 / DSM 2839 / NBRC 102507 / CH34) (Ralstonia metallidurans).